The primary structure comprises 250 residues: Histone H1.1 (250 aa).

Positions 1-11 (MSDSAVATSAS) are enriched in polar residues. 2 disordered regions span residues 1-52 (MSDS…QQMV) and 104-250 (QTKG…ATKK). Positions 44–118 (SHPPTQQMVD…GASGSFKLSA (75 aa)) constitute an H15 domain. The segment covering 122–133 (KDAKPKASAVEK) has biased composition (basic and acidic residues). Residues 140–161 (ASAARATKSKSSTSTTKKAAGA) show a composition bias toward low complexity. A compositionally biased stretch (basic and acidic residues) spans 174–191 (KNVEKKKADKEKAKDAKK). Residues 192-234 (TGTIKAKPTTAKAKSSATKPKTPKPKTTSAKPKKVVSATTPKK) are compositionally biased toward low complexity. Over residues 235 to 250 (TAVKKPKAKTASATKK) the composition is skewed to basic residues.

This sequence belongs to the histone H1/H5 family.

Its subcellular location is the nucleus. The protein resides in the chromosome. In terms of biological role, histones H1 are necessary for the condensation of nucleosome chains into higher-order structures. This is Histone H1.1 (His1.1) from Drosophila virilis (Fruit fly).